The primary structure comprises 103 residues: V-type ATP synthase subunit F (103 aa).

It belongs to the V-ATPase F subunit family.

Produces ATP from ADP in the presence of a proton gradient across the membrane. The sequence is that of V-type ATP synthase subunit F from Clostridium botulinum (strain Alaska E43 / Type E3).